The sequence spans 289 residues: MSKAREIRTKIASIKNTQKITRAMELVAASKMRKAQDRMAMSRPYASKIRKVISHVAASHAEYPHPYLQQRENIKRVGYIIVTTDRGLCGGLNVNLFRTAIADMKKWQADNIGMDLCVIGRKGEAFFRRYGGNVLAVADHLGDAPEVQDIIGIVKVMLDQYDKQQIDAIYIATNEFVNTMVQKPLVRQLLPLKTDEEEVEGGYWDYIYEPDESKDLLEMLLVRYIESQVYQAVIENIACEQSARMVAMKNATENAGQLIDELRLIYNKARQAGITQEIAEIVAGAAAVE.

The protein belongs to the ATPase gamma chain family. In terms of assembly, F-type ATPases have 2 components, CF(1) - the catalytic core - and CF(0) - the membrane proton channel. CF(1) has five subunits: alpha(3), beta(3), gamma(1), delta(1), epsilon(1). CF(0) has three main subunits: a, b and c.

The protein localises to the cell inner membrane. Functionally, produces ATP from ADP in the presence of a proton gradient across the membrane. The gamma chain is believed to be important in regulating ATPase activity and the flow of protons through the CF(0) complex. The protein is ATP synthase gamma chain of Coxiella burnetii (strain CbuG_Q212) (Coxiella burnetii (strain Q212)).